A 136-amino-acid polypeptide reads, in one-letter code: Large ribosomal subunit protein uL16c (136 aa).

Over residues 1-17 (MLSPKRVKFRKQHRGRM) the composition is skewed to basic residues. Residues 1–25 (MLSPKRVKFRKQHRGRMKGISTRGN) are disordered.

Belongs to the universal ribosomal protein uL16 family. As to quaternary structure, part of the 50S ribosomal subunit.

The protein resides in the plastid. It localises to the chloroplast. This chain is Large ribosomal subunit protein uL16c, found in Anthoceros angustus (Hornwort).